The sequence spans 437 residues: Probable N-acetylmuramidase (437 aa).

An N-terminal signal peptide occupies residues 1-57; it reads MPVSRVKVKNRHLKKKTKKPLAFYKPTTKFVGAVLIAGTLTTTHELLLQQTSPMVQA. Disordered stretches follow at residues 217–244, 291–319, and 367–392; these read SSAG…SSTT, SSTN…ASQT, and ATSN…NSNA. In terms of domain architecture, LysM 1 spans 243–286; sequence TTYTVKSGDTLWGISQRYGISVAQIQSANNLKSTIIYIGQKLLL. The segment covering 291–317 has biased composition (low complexity); sequence SSTNSGGSNNSASTTPTTSVTPAKPAS. The region spanning 319 to 362 is the LysM 2 domain; the sequence is TSVKVKSGDTLWALSVKYKTSIAQLKSWNHLSSDTIYIGQNLIV. In terms of domain architecture, LysM 3 spans 393–436; the sequence is SIHKVVKGDTLWGLSQKSGSPIASIKAWNHLSSDTILIGQYLRI.

This sequence belongs to the glycosyl hydrolase 73 family.

The protein localises to the secreted. It carries out the reaction Hydrolysis of (1-&gt;4)-beta-linkages between N-acetylmuramic acid and N-acetyl-D-glucosamine residues in a peptidoglycan and between N-acetyl-D-glucosamine residues in chitodextrins.. Functionally, hydrolyzes the cell wall of L.lactis and M.lysodeikticus. Required for cell separation during growth. In Lactococcus lactis subsp. cremoris (Streptococcus cremoris), this protein is Probable N-acetylmuramidase (acmA).